A 95-amino-acid polypeptide reads, in one-letter code: Aspartyl/glutamyl-tRNA(Asn/Gln) amidotransferase subunit C (95 aa).

The protein belongs to the GatC family. In terms of assembly, heterotrimer of A, B and C subunits.

It catalyses the reaction L-glutamyl-tRNA(Gln) + L-glutamine + ATP + H2O = L-glutaminyl-tRNA(Gln) + L-glutamate + ADP + phosphate + H(+). It carries out the reaction L-aspartyl-tRNA(Asn) + L-glutamine + ATP + H2O = L-asparaginyl-tRNA(Asn) + L-glutamate + ADP + phosphate + 2 H(+). Allows the formation of correctly charged Asn-tRNA(Asn) or Gln-tRNA(Gln) through the transamidation of misacylated Asp-tRNA(Asn) or Glu-tRNA(Gln) in organisms which lack either or both of asparaginyl-tRNA or glutaminyl-tRNA synthetases. The reaction takes place in the presence of glutamine and ATP through an activated phospho-Asp-tRNA(Asn) or phospho-Glu-tRNA(Gln). The sequence is that of Aspartyl/glutamyl-tRNA(Asn/Gln) amidotransferase subunit C from Rhodopseudomonas palustris (strain BisB5).